The following is a 247-amino-acid chain: Uridylate kinase (247 aa).

Position 14-17 (14-17 (KLSG)) interacts with ATP. The interval 22–27 (GERGVG) is involved in allosteric activation by GTP. Glycine 56 serves as a coordination point for UMP. ATP contacts are provided by glycine 57 and arginine 61. Residues aspartate 76 and 137 to 144 (IGSPYFST) contribute to the UMP site. Positions 165, 171, and 174 each coordinate ATP.

It belongs to the UMP kinase family. As to quaternary structure, homohexamer.

It is found in the cytoplasm. The enzyme catalyses UMP + ATP = UDP + ADP. It participates in pyrimidine metabolism; CTP biosynthesis via de novo pathway; UDP from UMP (UMPK route): step 1/1. Allosterically activated by GTP. Inhibited by UTP. Its function is as follows. Catalyzes the reversible phosphorylation of UMP to UDP. The polypeptide is Uridylate kinase (Streptococcus pneumoniae (strain ATCC BAA-255 / R6)).